A 358-amino-acid chain; its full sequence is DNA replication and repair protein RecF (358 aa).

Residue 30–37 (GNNGSGKT) participates in ATP binding.

Belongs to the RecF family.

It is found in the cytoplasm. Its function is as follows. The RecF protein is involved in DNA metabolism; it is required for DNA replication and normal SOS inducibility. RecF binds preferentially to single-stranded, linear DNA. It also seems to bind ATP. The polypeptide is DNA replication and repair protein RecF (Actinobacillus succinogenes (strain ATCC 55618 / DSM 22257 / CCUG 43843 / 130Z)).